The following is a 175-amino-acid chain: Ribosome maturation factor RimM (175 aa).

The PRC barrel domain occupies 97-169; that stretch reads EDKFYFHEII…TVRVITPEGL (73 aa).

Belongs to the RimM family. Binds ribosomal protein uS19.

The protein localises to the cytoplasm. An accessory protein needed during the final step in the assembly of 30S ribosomal subunit, possibly for assembly of the head region. Essential for efficient processing of 16S rRNA. May be needed both before and after RbfA during the maturation of 16S rRNA. It has affinity for free ribosomal 30S subunits but not for 70S ribosomes. The sequence is that of Ribosome maturation factor RimM from Christiangramia forsetii (strain DSM 17595 / CGMCC 1.15422 / KT0803) (Gramella forsetii).